The following is a 170-amino-acid chain: MLKKKWMVGLLAGCLAAGGFSYNAFATENNENRQASSKTDALTEQEAEAIAKTVVDGTVEDIDRDLYNGKEVYEVEIEKEGEDYDVYVDIHTKQALNDPLKEKAEQVAITKEEAEEIALKQTGGTVTESKLDEDDGAYIYEMEIQTKQGTETEFEISAKDGRIIKQEIDD.

A signal peptide spans 1–26 (MLKKKWMVGLLAGCLAAGGFSYNAFA).

This is an uncharacterized protein from Bacillus subtilis (strain 168).